The primary structure comprises 270 residues: Release factor glutamine methyltransferase (270 aa).

Residues 112–116 (GTGSG), Asp135, Trp162, and Asn178 each bind S-adenosyl-L-methionine. 178-181 (NPPY) contacts substrate.

Belongs to the protein N5-glutamine methyltransferase family. PrmC subfamily.

The enzyme catalyses L-glutaminyl-[peptide chain release factor] + S-adenosyl-L-methionine = N(5)-methyl-L-glutaminyl-[peptide chain release factor] + S-adenosyl-L-homocysteine + H(+). Functionally, methylates the class 1 translation termination release factors RF1/PrfA and RF2/PrfB on the glutamine residue of the universally conserved GGQ motif. The protein is Release factor glutamine methyltransferase of Bordetella pertussis (strain Tohama I / ATCC BAA-589 / NCTC 13251).